Reading from the N-terminus, the 459-residue chain is UDP-N-acetylmuramoylalanine--D-glutamate ligase (459 aa).

Position 118–124 (glycine 118–threonine 124) interacts with ATP.

Belongs to the MurCDEF family.

The protein localises to the cytoplasm. It catalyses the reaction UDP-N-acetyl-alpha-D-muramoyl-L-alanine + D-glutamate + ATP = UDP-N-acetyl-alpha-D-muramoyl-L-alanyl-D-glutamate + ADP + phosphate + H(+). It functions in the pathway cell wall biogenesis; peptidoglycan biosynthesis. Functionally, cell wall formation. Catalyzes the addition of glutamate to the nucleotide precursor UDP-N-acetylmuramoyl-L-alanine (UMA). In Desulfosudis oleivorans (strain DSM 6200 / JCM 39069 / Hxd3) (Desulfococcus oleovorans), this protein is UDP-N-acetylmuramoylalanine--D-glutamate ligase.